Here is an 866-residue protein sequence, read N- to C-terminus: MGHTHSRQLFVHMLSVMLKHRGITVSKTKLINFLSFIEEVCPWFPREGTVNLETWKKVGEQIRTHYTLHGPEKVPVETLSFWTLIRDCLDFDNDELKRLGNLLKQEEDPLHTPDSVPSYDPPPPPPPSLKMHPSDNDDSLSSTDEAELDEEAAKYHQEDWGFLAQEKGALTSKDELVECFKNLTIALQNAGIQLPSNNNTFPSAPPFPPAYTPTVMAGLDPPPGFPPPSKHMSPLQKALRQAQRLGEVVSDFSLAFPVFENNNQRYYESLPFKQLKELKIACSQYGPTAPFTIAMIESLGTQALPPNDWKQTARACLSGGDYLLWKSEFFEQCARIADVNRQQGIQTSYEMLIGEGPYQATDTQLNFLPGAYAQISNAARQAWKKLPSSSTKTEDLSKVRQGPDEPYQDFVARLLDTIGKIMSDEKAGMVLAKQLAFENANSACQAALRPYRKKGDLSDFIRICADIGPSYMQGIAMAAALQGKSIKEVLFQQQARNKKGLQKSGNSGCFVCGQPGHRAAVCPQKHQTSVNTPNLCPRCKKGKHWARDCRSKTDVQGNPLPPVSGNLGEGPAPGPETMLWGNTAGSKRTIADLCRATRGSAGLDLCATSYTVLTPEMGVQTLATGVFGPLPPGTVGLLLGRSSASLKGILIHPGVIDSDYTGEIKILASAPNKIIVINAGQRIAQLLLVPLVIQGKTINRDRQDKGFGSSDAYWVQNVTEARPELELRINANFFRGVLDTGADISVISDKYWPTTWPKQMAISTLQGIGQTTNPEQSSSLLTWKDKDGHTGQFKPYILPYLPVNLWGRDILSKMGVYLYSPSPTVTDLMLDQGLLPNQGLGKQHQGIILPLDLKPNQDRKGLGCFP.

The segment at 103–148 (LKQEEDPLHTPDSVPSYDPPPPPPPSLKMHPSDNDDSLSSTDEAEL) is disordered. The segment covering 119-128 (YDPPPPPPPS) has biased composition (pro residues). Residues 202–205 (PSAP) carry the PTAP/PSAP motif motif. Residues 208–211 (PPAY) carry the PPXY motif motif. The PTAP/PSAP motif signature appears at 287-290 (PTAP). Residues 507-524 (SGCFVCGQPGHRAAVCPQ) form a CCHC-type zinc finger. The interval 550–570 (RSKTDVQGNPLPPVSGNLGEG) is disordered. One can recognise a Peptidase A2 domain in the interval 734–810 (FRGVLDTGAD…LPVNLWGRDI (77 aa)). Asp-739 serves as the catalytic Protease; shared with dimeric partner. The region spanning 821-866 (PSPTVTDLMLDQGLLPNQGLGKQHQGIILPLDLKPNQDRKGLGCFP) is the G-patch domain.

The protein in the C-terminal section; belongs to the dUTPase family. In terms of assembly, homodimer. Interacts with the reverse transcriptase/ribonuclease H. As to quaternary structure, homotrimer. Released by autocatalytic processing. The protease can undergo further autoprocessing to yield 2 shorter but enzymatically active forms of 12 kDa and 13 kDa without the GDP domain. Post-translationally, myristoylated. Myristoylation of the matrix (MA) domain mediates the transport and binding of Gag polyproteins to the host plasma membrane and is required for the assembly of viral particles. In terms of processing, specific enzymatic cleavages in vivo yield mature proteins.

It is found in the virion. It carries out the reaction dUTP + H2O = dUMP + diphosphate + H(+). Functionally, matrix protein. Nucleocapsid protein p14: Nucleocapsid protein. Its function is as follows. Capsid protein. In terms of biological role, the aspartyl protease mediates proteolytic cleavages of Gag and Gag-Pol polyproteins during or shortly after the release of the virion from the plasma membrane. Cleavages take place as an ordered, step-wise cascade to yield mature proteins. This process is called maturation. Displays maximal activity during the budding process just prior to particle release from the cell. Functionally, enhances the activity of the reverse transcriptase. May be part of the mature RT. The chain is Gag-Pro polyprotein (pro) from Sheep pulmonary adenomatosis virus (Jaagsiekte sheep retrovirus).